Reading from the N-terminus, the 22-residue chain is Peptide PGLa-BM3 (22 aa).

Leu22 carries the leucine amide modification.

In terms of tissue distribution, expressed by the skin glands.

It is found in the secreted. In terms of biological role, antimicrobial peptide. This chain is Peptide PGLa-BM3, found in Xenopus boumbaensis (Mawa clawed frog).